The following is a 512-amino-acid chain: Kynurenine 3-monooxygenase (512 aa).

It belongs to the aromatic-ring hydroxylase family. KMO subfamily. The cofactor is FAD.

It is found in the mitochondrion outer membrane. It catalyses the reaction L-kynurenine + NADPH + O2 + H(+) = 3-hydroxy-L-kynurenine + NADP(+) + H2O. It participates in cofactor biosynthesis; NAD(+) biosynthesis; quinolinate from L-kynurenine: step 1/3. In terms of biological role, catalyzes the hydroxylation of L-kynurenine (L-Kyn) to form 3-hydroxy-L-kynurenine (L-3OHKyn). Required for synthesis of quinolinic acid. This chain is Kynurenine 3-monooxygenase (nic-3), found in Neurospora crassa (strain ATCC 24698 / 74-OR23-1A / CBS 708.71 / DSM 1257 / FGSC 987).